Consider the following 187-residue polypeptide: UPF0301 protein Cpha266_0885 (187 aa).

It belongs to the UPF0301 (AlgH) family.

The chain is UPF0301 protein Cpha266_0885 from Chlorobium phaeobacteroides (strain DSM 266 / SMG 266 / 2430).